Reading from the N-terminus, the 251-residue chain is Phosphate import ATP-binding protein PstB 2 (251 aa).

In terms of domain architecture, ABC transporter spans 5–246 (ITSKDVHLSY…PKKQITSDYL (242 aa)). 37–44 (GPSGCGKS) lines the ATP pocket.

Belongs to the ABC transporter superfamily. Phosphate importer (TC 3.A.1.7) family. In terms of assembly, the complex is composed of two ATP-binding proteins (PstB), two transmembrane proteins (PstC and PstA) and a solute-binding protein (PstS).

Its subcellular location is the cell membrane. The enzyme catalyses phosphate(out) + ATP + H2O = ADP + 2 phosphate(in) + H(+). Its function is as follows. Part of the ABC transporter complex PstSACB involved in phosphate import. Responsible for energy coupling to the transport system. The polypeptide is Phosphate import ATP-binding protein PstB 2 (Lactobacillus johnsonii (strain CNCM I-12250 / La1 / NCC 533)).